Reading from the N-terminus, the 178-residue chain is Crossover junction endodeoxyribonuclease RuvC (178 aa).

Residues D21, E81, and H154 contribute to the active site. 3 residues coordinate Mg(2+): D21, E81, and H154.

It belongs to the RuvC family. As to quaternary structure, homodimer which binds Holliday junction (HJ) DNA. The HJ becomes 2-fold symmetrical on binding to RuvC with unstacked arms; it has a different conformation from HJ DNA in complex with RuvA. In the full resolvosome a probable DNA-RuvA(4)-RuvB(12)-RuvC(2) complex forms which resolves the HJ. The cofactor is Mg(2+).

The protein localises to the cytoplasm. It carries out the reaction Endonucleolytic cleavage at a junction such as a reciprocal single-stranded crossover between two homologous DNA duplexes (Holliday junction).. In terms of biological role, the RuvA-RuvB-RuvC complex processes Holliday junction (HJ) DNA during genetic recombination and DNA repair. Endonuclease that resolves HJ intermediates. Cleaves cruciform DNA by making single-stranded nicks across the HJ at symmetrical positions within the homologous arms, yielding a 5'-phosphate and a 3'-hydroxyl group; requires a central core of homology in the junction. The consensus cleavage sequence is 5'-(A/T)TT(C/G)-3'. Cleavage occurs on the 3'-side of the TT dinucleotide at the point of strand exchange. HJ branch migration catalyzed by RuvA-RuvB allows RuvC to scan DNA until it finds its consensus sequence, where it cleaves and resolves the cruciform DNA. The protein is Crossover junction endodeoxyribonuclease RuvC of Treponema denticola (strain ATCC 35405 / DSM 14222 / CIP 103919 / JCM 8153 / KCTC 15104).